Here is a 503-residue protein sequence, read N- to C-terminus: MEESQGYLELYKSRQHDFLYPLIFQEYIYVLAHDHGLNRSILLENLGSDNKFSSLIVKRLITRMYQQNRLIISANDSNRNPSLGHNKDLYSQIISEGFAVIVEIPFPLRLVSSLERKEIVKSHNLRSIHSVFPFLEDKFLHLNYVSDILIPHPIHLEILVQTLRYWVKDASSLHLLRFFLYEYRNWNSLINPKKSIFVFSKRNQRLFLFLYNSHVYEYESVFVFLRTQSSHLRSTSSGALLERIYFYGKIKHLVEVFANDFQAILWLFKDTFVHYVRYQGKSILASKGTPLLMNKWKYYLVNFWQCNFYVWSQPVRIYINQLSNHSLYFLGYISSVGLNPSVVRNQMLENSFIIDNAIKKFDIIVPIIPLIGSLAKAKFCNVLGHPISKPARADSSDSDIIDRFVRICKNLSHYHSGSSKKKSLYRIKYILRLSCARTLARKHKSPVRAFLKRLGSELLEEFLTEEEQVLSLIVPASSTSRRLYRGRIWYLDIICINDLANHE.

The protein belongs to the intron maturase 2 family. MatK subfamily.

Its subcellular location is the plastid. The protein resides in the chloroplast. Usually encoded in the trnK tRNA gene intron. Probably assists in splicing its own and other chloroplast group II introns. In Liquidambar styraciflua (Sweetgum tree), this protein is Maturase K.